A 496-amino-acid chain; its full sequence is probable leucine aminopeptidase 2 (496 aa).

The first 16 residues, 1-16, serve as a signal peptide directing secretion; it reads MRSLLWASLLSGVLAG. The PA domain occupies 111-205; the sequence is PSVEVTADVA…SLEDGQKLIK (95 aa). An N-linked (GlcNAc...) asparagine glycan is attached at Asn224. Residues His248 and Asp260 each coordinate Zn(2+). Glu292 acts as the Proton acceptor in catalysis. Residue Glu293 participates in Zn(2+) binding. A glycan (N-linked (GlcNAc...) asparagine) is linked at Asn307. Position 321 (Asp321) interacts with Zn(2+). Asn341 and Asn402 each carry an N-linked (GlcNAc...) asparagine glycan. A Zn(2+)-binding site is contributed by His419. 2 N-linked (GlcNAc...) asparagine glycosylation sites follow: Asn424 and Asn458. A disordered region spans residues 475–496; that stretch reads KRAPKTHAHVSGSGCWHSQVEA.

It belongs to the peptidase M28 family. M28A subfamily. Monomer. Zn(2+) is required as a cofactor.

The protein resides in the secreted. Functionally, extracellular aminopeptidase that releases a wide variety of amino acids from natural peptides. The protein is probable leucine aminopeptidase 2 (lap2) of Aspergillus oryzae (strain ATCC 42149 / RIB 40) (Yellow koji mold).